Reading from the N-terminus, the 35-residue chain is Dermonecrotic toxin LrSicTox-alphaI-1 (35 aa).

His-11 is an active-site residue. Residue Asp-33 coordinates Mg(2+).

It belongs to the arthropod phospholipase D family. Class II subfamily. Mg(2+) serves as cofactor. Contains 2 disulfide bonds. Expressed by the venom gland.

It localises to the secreted. The enzyme catalyses an N-(acyl)-sphingosylphosphocholine = an N-(acyl)-sphingosyl-1,3-cyclic phosphate + choline. It carries out the reaction an N-(acyl)-sphingosylphosphoethanolamine = an N-(acyl)-sphingosyl-1,3-cyclic phosphate + ethanolamine. It catalyses the reaction a 1-acyl-sn-glycero-3-phosphocholine = a 1-acyl-sn-glycero-2,3-cyclic phosphate + choline. The catalysed reaction is a 1-acyl-sn-glycero-3-phosphoethanolamine = a 1-acyl-sn-glycero-2,3-cyclic phosphate + ethanolamine. Its function is as follows. Dermonecrotic toxins cleave the phosphodiester linkage between the phosphate and headgroup of certain phospholipids (sphingolipid and lysolipid substrates), forming an alcohol (often choline) and a cyclic phosphate. This toxin acts on sphingomyelin (SM). It may also act on ceramide phosphoethanolamine (CPE), lysophosphatidylcholine (LPC) and lysophosphatidylethanolamine (LPE), but not on lysophosphatidylserine (LPS), and lysophosphatidylglycerol (LPG). It acts by transphosphatidylation, releasing exclusively cyclic phosphate products as second products. Induces dermonecrosis, hemolysis, increased vascular permeability, edema, inflammatory response, and platelet aggregation. The polypeptide is Dermonecrotic toxin LrSicTox-alphaI-1 (Loxosceles reclusa (Brown recluse spider)).